The chain runs to 392 residues: Probable glucan endo-1,6-beta-glucosidase B (392 aa).

Residues 1–18 (MKVTRLAVLNTLATLTVA) form the signal peptide. An N-linked (GlcNAc...) asparagine glycan is attached at Asn-31. The Proton donor role is filled by Glu-220. The active-site Nucleophile is Glu-322.

This sequence belongs to the glycosyl hydrolase 5 (cellulase A) family.

It is found in the secreted. It catalyses the reaction Random hydrolysis of (1-&gt;6)-linkages in (1-&gt;6)-beta-D-glucans.. Functionally, beta-glucanases participate in the metabolism of beta-glucan, the main structural component of the cell wall. Acts on lutean, pustulan and 1,6-oligo-beta-D-glucosides. The protein is Probable glucan endo-1,6-beta-glucosidase B (exgB) of Aspergillus flavus (strain ATCC 200026 / FGSC A1120 / IAM 13836 / NRRL 3357 / JCM 12722 / SRRC 167).